Here is a 371-residue protein sequence, read N- to C-terminus: Anhydro-N-acetylmuramic acid kinase (371 aa).

Position 15–22 (15–22 (GTSLDGVD)) interacts with ATP.

Belongs to the anhydro-N-acetylmuramic acid kinase family.

It catalyses the reaction 1,6-anhydro-N-acetyl-beta-muramate + ATP + H2O = N-acetyl-D-muramate 6-phosphate + ADP + H(+). Its pathway is amino-sugar metabolism; 1,6-anhydro-N-acetylmuramate degradation. It participates in cell wall biogenesis; peptidoglycan recycling. In terms of biological role, catalyzes the specific phosphorylation of 1,6-anhydro-N-acetylmuramic acid (anhMurNAc) with the simultaneous cleavage of the 1,6-anhydro ring, generating MurNAc-6-P. Is required for the utilization of anhMurNAc either imported from the medium or derived from its own cell wall murein, and thus plays a role in cell wall recycling. The sequence is that of Anhydro-N-acetylmuramic acid kinase from Cereibacter sphaeroides (strain ATCC 17023 / DSM 158 / JCM 6121 / CCUG 31486 / LMG 2827 / NBRC 12203 / NCIMB 8253 / ATH 2.4.1.) (Rhodobacter sphaeroides).